Here is a 105-residue protein sequence, read N- to C-terminus: Nucleoid-associated protein SE_2306 (105 aa).

The segment at 1–40 (MRGGGNMQQMMKQMQKMQKKMAQEQEKLKEERVAGTAGGG) is disordered. The segment covering 7 to 16 (MQQMMKQMQK) has biased composition (low complexity). Residues 21–33 (MAQEQEKLKEERV) are compositionally biased toward basic and acidic residues.

The protein belongs to the YbaB/EbfC family. In terms of assembly, homodimer.

The protein resides in the cytoplasm. It localises to the nucleoid. In terms of biological role, binds to DNA and alters its conformation. May be involved in regulation of gene expression, nucleoid organization and DNA protection. The polypeptide is Nucleoid-associated protein SE_2306 (Staphylococcus epidermidis (strain ATCC 12228 / FDA PCI 1200)).